Consider the following 106-residue polypeptide: Ribosomal protein eL42-like (106 aa).

The disordered stretch occupies residues 26–53 (YKKGKDSLYAQGRRRYDRKQSGYGGQTK). An N6-methyllysine modification is found at Lys53.

It belongs to the eukaryotic ribosomal protein eL42 family. Ubiquitously expressed.

The protein resides in the cytoplasm. This Homo sapiens (Human) protein is Ribosomal protein eL42-like (RPL36AL).